A 111-amino-acid chain; its full sequence is Iron-sulfur cluster insertion protein ErpA (111 aa).

Cys39, Cys103, and Cys105 together coordinate iron-sulfur cluster.

This sequence belongs to the HesB/IscA family. Homodimer. It depends on iron-sulfur cluster as a cofactor.

Functionally, required for insertion of 4Fe-4S clusters for at least IspG. This is Iron-sulfur cluster insertion protein ErpA from Buchnera aphidicola subsp. Cinara cedri (strain Cc).